Reading from the N-terminus, the 212-residue chain is uncharacterized protein (212 aa).

The tract at residues 42 to 101 (GITGPKATKSPSRRTTRSPSPSRRTTRSSPSRRTTRSSPSRRTTRSPSPSGRRKQGGPAV) is disordered. Low complexity predominate over residues 58-91 (RSPSPSRRTTRSSPSRRTTRSSPSRRTTRSPSPS).

This sequence belongs to the IIV-6 378R family.

This is an uncharacterized protein from Invertebrate iridescent virus 3 (IIV-3).